Consider the following 596-residue polypeptide: Sphingomyelinase C 1 (596 aa).

Residues 1–36 form the signal peptide; sequence MITKRNIPCKKNWKYKKKSISLTLITICYMFLFLTS. The disordered stretch occupies residues 63 to 118; it reads KIEDSTNTDPSSNVNEEDENSINANANDNAPSDSDSSNPRSPDKNPVNPTSPNSSS. The segment covering 67–76 has biased composition (polar residues); that stretch reads STNTDPSSNV. The span at 83 to 118 shows a compositional bias: low complexity; that stretch reads SINANANDNAPSDSDSSNPRSPDKNPVNPTSPNSSS.

The protein localises to the secreted. The catalysed reaction is a sphingomyelin + H2O = phosphocholine + an N-acylsphing-4-enine + H(+). In Leptospira interrogans serogroup Icterohaemorrhagiae serovar copenhageni (strain Fiocruz L1-130), this protein is Sphingomyelinase C 1 (sph1).